The chain runs to 270 residues: Chymotrypsin-like elastase family member 3B (270 aa).

The segment at residues 1 to 15 (MMLRLLSSLLLVAVA) is a signal peptide (or 16). The propeptide at 16 to 28 (SGYGPPSSRPSSR) is activation peptide. The Peptidase S1 domain occupies 29–268 (VVNGEDAVPY…FIDWIEETIA (240 aa)). A disulfide bridge connects residues cysteine 58 and cysteine 74. Catalysis depends on histidine 73, which acts as the Charge relay system. An N-linked (GlcNAc...) asparagine glycan is attached at asparagine 114. An intrachain disulfide couples cysteine 117 to cysteine 120. Aspartate 123 functions as the Charge relay system in the catalytic mechanism. Intrachain disulfides connect cysteine 157-cysteine 223, cysteine 188-cysteine 204, and cysteine 213-cysteine 244. Residue serine 217 is the Charge relay system of the active site.

It belongs to the peptidase S1 family. Elastase subfamily. In terms of tissue distribution, pancreas. Not detectable in keratinocytes.

It carries out the reaction Preferential cleavage: Ala-|-Xaa. Does not hydrolyze elastin.. Functionally, efficient protease with alanine specificity but only little elastolytic activity. In Homo sapiens (Human), this protein is Chymotrypsin-like elastase family member 3B (CELA3B).